We begin with the raw amino-acid sequence, 1105 residues long: Carbamoyl phosphate synthase large chain (1105 aa).

Residues 1-402 are carboxyphosphate synthetic domain; the sequence is MPKRDDIEKV…ALGKAVRSLE (402 aa). ATP-binding residues include Arg129, Arg169, Gly175, Gly176, Lys208, Val210, Glu215, Gly241, Ile242, His243, Gln285, and Glu299. The ATP-grasp 1 domain occupies 133-328; it reads KTAMKNCGLE…IAKISALLAV (196 aa). Mg(2+)-binding residues include Gln285, Glu299, and Asn301. Residues Gln285, Glu299, and Asn301 each contribute to the Mn(2+) site. Residues 403 to 542 form an oligomerization domain region; the sequence is LDIAPKLDLR…STYNGMENET (140 aa). Residues 543–945 are carbamoyl phosphate synthetic domain; it reads IPSKRRKIMV…AFAKAQLSAD (403 aa). The ATP-grasp 2 domain maps to 667–858; it reads AKFLKQSGLS…VAKIAAKTII (192 aa). Positions 703, 742, 744, 749, 774, 775, 776, 777, 817, and 829 each coordinate ATP. 3 residues coordinate Mg(2+): Gln817, Glu829, and Asn831. Mn(2+)-binding residues include Gln817, Glu829, and Asn831. One can recognise an MGS-like domain in the interval 940–1101; that stretch reads AQLSADGIST…QDIFYAQQNT (162 aa). An allosteric domain region spans residues 946-1105; the sequence is GISTKSLLVT…YAQQNTLLKK (160 aa).

It belongs to the CarB family. In terms of assembly, composed of two chains; the small (or glutamine) chain promotes the hydrolysis of glutamine to ammonia, which is used by the large (or ammonia) chain to synthesize carbamoyl phosphate. Tetramer of heterodimers (alpha,beta)4. Mg(2+) is required as a cofactor. The cofactor is Mn(2+).

It catalyses the reaction hydrogencarbonate + L-glutamine + 2 ATP + H2O = carbamoyl phosphate + L-glutamate + 2 ADP + phosphate + 2 H(+). The enzyme catalyses hydrogencarbonate + NH4(+) + 2 ATP = carbamoyl phosphate + 2 ADP + phosphate + 2 H(+). The protein operates within amino-acid biosynthesis; L-arginine biosynthesis; carbamoyl phosphate from bicarbonate: step 1/1. It functions in the pathway pyrimidine metabolism; UMP biosynthesis via de novo pathway; (S)-dihydroorotate from bicarbonate: step 1/3. Functionally, large subunit of the glutamine-dependent carbamoyl phosphate synthetase (CPSase). CPSase catalyzes the formation of carbamoyl phosphate from the ammonia moiety of glutamine, carbonate, and phosphate donated by ATP, constituting the first step of 2 biosynthetic pathways, one leading to arginine and/or urea and the other to pyrimidine nucleotides. The large subunit (synthetase) binds the substrates ammonia (free or transferred from glutamine from the small subunit), hydrogencarbonate and ATP and carries out an ATP-coupled ligase reaction, activating hydrogencarbonate by forming carboxy phosphate which reacts with ammonia to form carbamoyl phosphate. This chain is Carbamoyl phosphate synthase large chain, found in Pseudothermotoga lettingae (strain ATCC BAA-301 / DSM 14385 / NBRC 107922 / TMO) (Thermotoga lettingae).